A 181-amino-acid chain; its full sequence is Adenine phosphoribosyltransferase (181 aa).

The protein belongs to the purine/pyrimidine phosphoribosyltransferase family. In terms of assembly, homodimer.

It localises to the cytoplasm. It catalyses the reaction AMP + diphosphate = 5-phospho-alpha-D-ribose 1-diphosphate + adenine. The protein operates within purine metabolism; AMP biosynthesis via salvage pathway; AMP from adenine: step 1/1. Catalyzes a salvage reaction resulting in the formation of AMP, that is energically less costly than de novo synthesis. The protein is Adenine phosphoribosyltransferase of Pseudoalteromonas translucida (strain TAC 125).